We begin with the raw amino-acid sequence, 479 residues long: Cysteine protease effector 1 (479 aa).

This Escherichia coli O1:K1:H7 (strain ATCC 11775 / DSM 30083 / JCM 1649 / NBRC 102203 / NCTC 9001 / U5/41) protein is Cysteine protease effector 1.